The chain runs to 243 residues: MENQKEKILVVDDEASIRRILETRLTIIGYEVITASNGEEALIIFRKEYPSLVVLDVMMPKLDGYGVCQELRKESDVPIIMLTALGEVCDRITGLEIGADDYVVKPFSPKELEARIRSVLRRADKITTNLGVPNSGIISIGFLKIDTNKRQVYKNNERVRLTGMEFSLLELLVSKAGEPFSRASILQEVWGYTPERHVDTRVVDVHISRLRAKLEDDPSNPDLILTARGTGYLFQRIIEMNKL.

One can recognise a Response regulatory domain in the interval Lys-7–Leu-120. 4-aspartylphosphate is present on Asp-56. The segment at residues Asp-76–Gly-94 is a DNA-binding region (H-T-H motif). Positions Ser-135–Arg-236 form a DNA-binding region, ompR/PhoB-type.

The protein localises to the plastid. It is found in the chloroplast. Its function is as follows. Probable promoter-specific protein mediating the interaction between DNA and RNA polymerase. The polypeptide is Probable transcriptional regulator ycf27 (ycf27) (Porphyra purpurea (Red seaweed)).